The primary structure comprises 196 residues: Imidazoleglycerol-phosphate dehydratase (196 aa).

Belongs to the imidazoleglycerol-phosphate dehydratase family.

The protein localises to the cytoplasm. It carries out the reaction D-erythro-1-(imidazol-4-yl)glycerol 3-phosphate = 3-(imidazol-4-yl)-2-oxopropyl phosphate + H2O. It functions in the pathway amino-acid biosynthesis; L-histidine biosynthesis; L-histidine from 5-phospho-alpha-D-ribose 1-diphosphate: step 6/9. In Ralstonia pickettii (strain 12J), this protein is Imidazoleglycerol-phosphate dehydratase.